Consider the following 637-residue polypeptide: METIRLTTAQALIKFLNQQYVHSDGEEFPFVEGIFNIFGHGNVLGIGHALEQDPGHLKVYQGKNEQGMAHTAIAYSKQMLRKKIYAITTSSGPGSANLVTAAATALANQIPILLLPADTYATRQPDPVLQQFEQEQSIAITTNDALQPVSRYWDRITRPEQLMSSLIRAFEVMTDPAKAGPATICISQDVEGEAFDYDVRFFEKRVHYIDRKLPSERELKGAADLIKKSKRPLLVVGGGAKYSEAREALIAFSETFNVPLTETQAGKSAVEASFKNNLGGLGITGTLAANKAAQQADLVIGIGTRFTDFATSSKTLFDFEKVKFVNINVSRMQAYKLDAFPVVADAKRTLEALVPMLEGYKSEYGDDIGQLKAEWLKERERLGKVTFDRERFEPEIKGHFTQEVMNEYADALQTEFAQTTALLTINETIDPDSVIICAAGSLPGDLQRLWHAEVPNTYHLEYGYSCMGYEVSGTLGLKLAEPNKEVYAIVGDGSFLMLHSELVTAIQYHKKINVLLFDNSGYGCINNLQMDFGGGSYFCEFRTADEKILHVDYAKVAEGYGAKSYRVSTVEELKAALEDAKKQECSTLIDIKVLPKTMTDGYDGSWWNLGVSEVSDREGIQKAYELKQEKLTRAKQY.

Position 65 (Glu65) interacts with thiamine diphosphate. Positions 441 to 521 (SLPGDLQRLW…INVLLFDNSG (81 aa)) are thiamine pyrophosphate binding. Mg(2+) contacts are provided by Asp492 and Asn519.

This sequence belongs to the TPP enzyme family. Mg(2+) serves as cofactor. It depends on thiamine diphosphate as a cofactor.

It catalyses the reaction 3D-3,5/4-trihydroxycyclohexane-1,2-dione + H2O = 5-deoxy-D-glucuronate + H(+). Its pathway is polyol metabolism; myo-inositol degradation into acetyl-CoA; acetyl-CoA from myo-inositol: step 3/7. Its function is as follows. Involved in the cleavage of the C1-C2 bond of 3D-(3,5/4)-trihydroxycyclohexane-1,2-dione (THcHDO) to yield 5-deoxy-glucuronate (5DG). The chain is 3D-(3,5/4)-trihydroxycyclohexane-1,2-dione hydrolase from Halalkalibacterium halodurans (strain ATCC BAA-125 / DSM 18197 / FERM 7344 / JCM 9153 / C-125) (Bacillus halodurans).